We begin with the raw amino-acid sequence, 472 residues long: SURF6 homolog gldi-11 (472 aa).

Disordered regions lie at residues 53–73 (LSKKERKSMSAQQKQHLAKGL), 89–232 (KSKQ…SPEI), 249–350 (KVER…DRAL), and 414–472 (LVKK…GRIL). Residues 95-106 (KVQPQKVVAPVK) are compositionally biased toward low complexity. Residues 107–132 (RPADQNKNKEKVVKKDQKKQDKKADS) show a composition bias toward basic and acidic residues. Over residues 133-150 (DSEEDDSSDDEEKEETDE) the composition is skewed to acidic residues. The span at 151–160 (PVAKKQKKEE) shows a compositional bias: basic and acidic residues. Composition is skewed to acidic residues over residues 161–175 (SSDDDEDSEDGEEPE) and 182–194 (EAEDSDSTDEEEE). Residues 197 to 210 (SKPNKTVAQSTLKS) are compositionally biased toward polar residues. Over residues 212–221 (GKIDKEIQKL) the composition is skewed to basic and acidic residues. Positions 274 to 285 (LKRRESKLKLKQ) are enriched in basic residues. The segment covering 286-305 (RRAEEKKGKEAAAQVKKETV) has biased composition (basic and acidic residues). The segment covering 414-426 (LVKKNKMKDRRKQ) has biased composition (basic residues). Positions 427–443 (KWENRENKTEGEKQTKQ) are enriched in basic and acidic residues. The segment covering 459-472 (KRKMNKLRNKGRIL) has biased composition (basic residues).

The protein belongs to the SURF6 family.

The protein resides in the nucleus. The protein localises to the nucleoplasm. In terms of biological role, binds to both DNA and RNA in vitro, with a stronger binding capacity for RNA. May represent a nucleolar constitutive protein involved in ribosomal biosynthesis or assembly. In Caenorhabditis elegans, this protein is SURF6 homolog gldi-11.